We begin with the raw amino-acid sequence, 343 residues long: Melanoma-associated antigen B18 (343 aa).

Positions Met-1–Gln-17 are enriched in basic residues. The interval Met-1–Trp-102 is disordered. Residues Ala-67 to Ser-87 show a composition bias toward polar residues. A compositionally biased stretch (basic and acidic residues) spans Gln-88–Trp-102. The segment at Glu-100 to Lys-343 is interaction with LNX1. Positions Leu-107–Ala-306 constitute an MAGE domain. Positions Arg-313–Lys-343 are disordered. Residues Ala-316–Arg-333 show a composition bias toward low complexity. Over residues Thr-334–Lys-343 the composition is skewed to polar residues.

Interacts with LNX1.

Its subcellular location is the cytoplasm. In terms of biological role, may enhance ubiquitin ligase activity of RING-type zinc finger-containing E3 ubiquitin-protein ligases. Proposed to act through recruitment and/or stabilization of the Ubl-conjugating enzyme (E2) at the E3:substrate complex. This is Melanoma-associated antigen B18 (MAGEB18) from Homo sapiens (Human).